The sequence spans 263 residues: Aquaporin Lacbi1:233199 (263 aa).

Topologically, residues 1-17 are cytoplasmic; the sequence is MFTLAHHRHAIRKPMAE. The helical transmembrane segment at 18-38 threads the bilayer; it reads FFGVALLVIFGAGAACQVVLS. The Extracellular portion of the chain corresponds to 39 to 44; it reads TNPNSF. A helical transmembrane segment spans residues 45–65; it reads LSINFGWAIGIAMGAWISGSI. Topologically, residues 66-88 are cytoplasmic; the sequence is SGGHINPAITIAMATYRGFPWRE. Residues 71–73 carry the NPA 1 motif; it reads NPA. Residues 89–109 form a helical membrane-spanning segment; sequence VPSYILAQVLGGVVGAALVYA. At 110-143 the chain is on the extracellular side; sequence NYIHAIDVFEGGRHIRTQATASLFATYALPYMTQ. The helical transmembrane segment at 144–164 threads the bilayer; it reads VSCFFSEFLATAVLAMMVLAL. Topologically, residues 165 to 174 are cytoplasmic; sequence TDNRNGAPTN. Residues 175-195 traverse the membrane as a helical segment; sequence GLSPFALFVLFIGLGASLGME. The Extracellular portion of the chain corresponds to 196–227; sequence TAYALNPARDFGPRLFLAMAGYGKALFNYRSQ. The NPA 2 motif lies at 201-203; the sequence is NPA. The helical transmembrane segment at 228–248 threads the bilayer; that stretch reads YWLWAPIIAPVLGAQAGGLLY. At 249-263 the chain is on the cytoplasmic side; the sequence is DTFLYDGDDSPIKWR.

This sequence belongs to the MIP/aquaporin (TC 1.A.8) family.

The protein resides in the membrane. The enzyme catalyses H2O(in) = H2O(out). Its function is as follows. Probable water channel required to facilitate the transport of water across membranes. The sequence is that of Aquaporin Lacbi1:233199 from Laccaria bicolor (strain S238N-H82 / ATCC MYA-4686) (Bicoloured deceiver).